A 301-amino-acid chain; its full sequence is tRNA dimethylallyltransferase (301 aa).

10–17 (GATATGKT) provides a ligand contact to ATP. Position 12-17 (12-17 (TATGKT)) interacts with substrate. Residues 35 to 38 (DSRQ) are interaction with substrate tRNA.

It belongs to the IPP transferase family. As to quaternary structure, monomer. Requires Mg(2+) as cofactor.

The catalysed reaction is adenosine(37) in tRNA + dimethylallyl diphosphate = N(6)-dimethylallyladenosine(37) in tRNA + diphosphate. Functionally, catalyzes the transfer of a dimethylallyl group onto the adenine at position 37 in tRNAs that read codons beginning with uridine, leading to the formation of N6-(dimethylallyl)adenosine (i(6)A). The sequence is that of tRNA dimethylallyltransferase from Crocosphaera subtropica (strain ATCC 51142 / BH68) (Cyanothece sp. (strain ATCC 51142)).